The primary structure comprises 474 residues: Microtubule protein alp7 (474 aa).

Residues 1–20 are compositionally biased toward low complexity; the sequence is MSDIVSSSTDYSRRSPSSSS. Disordered regions lie at residues 1-79, 93-114, and 164-223; these read MSDI…DTLN, KSFD…LSQH, and SLQT…NSTQ. Residue Ser-17 is modified to Phosphoserine. Over residues 25-36 the composition is skewed to basic and acidic residues; the sequence is ETDHTGFHEKRQ. Residues 66-76 show a composition bias toward polar residues; it reads SKPNPQLNLKD. Polar residues-rich tracts occupy residues 177-189 and 201-223; these read SNGS…NTAP and RNSA…NSTQ. Coiled-coil stretches lie at residues 219-273 and 367-471; these read INST…QLRS and KISN…LNLE.

Interacts with alp14.

Its subcellular location is the nucleus. It is found in the cytoplasm. It localises to the cytoskeleton. The protein localises to the spindle. The protein resides in the chromosome. Its subcellular location is the centromere. It is found in the kinetochore. Functionally, required for bipolar spindle formation and proper chromosome segregation. Has an indirect role in connecting the kinetochores and the plus end of pole to chromosome microtubules by targeting alp14 to the spindle pole body. Involved in the emergence of large microtubule organizing centers (MTOC) in interphase cells. Attaches to the minus ends of microtubules and associates with the sites of microtubule attachment on the nuclear envelope. This leads to the stabilization of the microtubule bundles. The chain is Microtubule protein alp7 (alp7) from Schizosaccharomyces pombe (strain 972 / ATCC 24843) (Fission yeast).